Here is a 245-residue protein sequence, read N- to C-terminus: Orotidine 5'-phosphate decarboxylase (245 aa).

Substrate is bound by residues D22, K44, 71–80 (DLKFHDIPNT), T131, R192, Q201, G221, and R222. K73 functions as the Proton donor in the catalytic mechanism.

The protein belongs to the OMP decarboxylase family. Type 1 subfamily. Homodimer.

The catalysed reaction is orotidine 5'-phosphate + H(+) = UMP + CO2. It participates in pyrimidine metabolism; UMP biosynthesis via de novo pathway; UMP from orotate: step 2/2. In terms of biological role, catalyzes the decarboxylation of orotidine 5'-monophosphate (OMP) to uridine 5'-monophosphate (UMP). The polypeptide is Orotidine 5'-phosphate decarboxylase (Escherichia coli (strain 55989 / EAEC)).